The following is a 549-amino-acid chain: Probable serine/threonine-protein kinase WNK5 (549 aa).

The region spanning 25 to 283 is the Protein kinase domain; that stretch reads GRFREVLGKG…AKELLADPFL (259 aa). ATP contacts are provided by residues 105-108 and K155; that span reads TELF. The Proton acceptor role is filled by D172. Residues 414 to 490 are disordered; sequence ESFGHEDDED…SPAIDDDQNQ (77 aa). Positions 452–463 are enriched in acidic residues; sequence DDSSNDVIPDMD. The span at 467-476 shows a compositional bias: low complexity; sequence RSSNRLLNSS. S504 is modified (phosphoserine). The disordered stretch occupies residues 525–549; sequence RGRGFDPNTNELQPQPSSTDFIRRC. The segment covering 531–549 has biased composition (polar residues); that stretch reads PNTNELQPQPSSTDFIRRC.

The protein belongs to the protein kinase superfamily. Ser/Thr protein kinase family. WNK subfamily. Interacts with AHK4.

It carries out the reaction L-seryl-[protein] + ATP = O-phospho-L-seryl-[protein] + ADP + H(+). The enzyme catalyses L-threonyl-[protein] + ATP = O-phospho-L-threonyl-[protein] + ADP + H(+). Functionally, regulates flowering time by modulating the photoperiod pathway. This Arabidopsis thaliana (Mouse-ear cress) protein is Probable serine/threonine-protein kinase WNK5 (WNK5).